The primary structure comprises 210 residues: Probable GTP-binding protein EngB (210 aa).

The 177-residue stretch at 22-198 (FLPEYAFIGR…LTYIDEVNQE (177 aa)) folds into the EngB-type G domain. GTP is bound by residues 30 to 37 (GRSNVGKS), 57 to 61 (GKTQL), 75 to 78 (DLPG), 142 to 145 (TKAD), and 177 to 179 (TSS). Ser-37 and Thr-59 together coordinate Mg(2+).

Belongs to the TRAFAC class TrmE-Era-EngA-EngB-Septin-like GTPase superfamily. EngB GTPase family. Mg(2+) serves as cofactor.

Functionally, necessary for normal cell division and for the maintenance of normal septation. This Flavobacterium johnsoniae (strain ATCC 17061 / DSM 2064 / JCM 8514 / BCRC 14874 / CCUG 350202 / NBRC 14942 / NCIMB 11054 / UW101) (Cytophaga johnsonae) protein is Probable GTP-binding protein EngB.